The chain runs to 284 residues: Bifunctional protein FolD (284 aa).

NADP(+) is bound by residues 166–168 and Ile232; that span reads GAS.

This sequence belongs to the tetrahydrofolate dehydrogenase/cyclohydrolase family. Homodimer.

It catalyses the reaction (6R)-5,10-methylene-5,6,7,8-tetrahydrofolate + NADP(+) = (6R)-5,10-methenyltetrahydrofolate + NADPH. The enzyme catalyses (6R)-5,10-methenyltetrahydrofolate + H2O = (6R)-10-formyltetrahydrofolate + H(+). It functions in the pathway one-carbon metabolism; tetrahydrofolate interconversion. Functionally, catalyzes the oxidation of 5,10-methylenetetrahydrofolate to 5,10-methenyltetrahydrofolate and then the hydrolysis of 5,10-methenyltetrahydrofolate to 10-formyltetrahydrofolate. This Pseudoalteromonas translucida (strain TAC 125) protein is Bifunctional protein FolD.